Here is a 332-residue protein sequence, read N- to C-terminus: 3-ketodihydrosphingosine reductase (332 aa).

The signal sequence occupies residues 1-25 (MLLLAAAGLVAFVLLLYMVSPLISP). The Cytoplasmic portion of the chain corresponds to 26-270 (KPLALPGAHV…GNFNSSIGSD (245 aa)). NADPH-binding residues include Gly-39, Ser-41, Ser-42, Gly-43, Arg-64, Lys-68, and Asp-93. Positions 39 to 43 (GGSSG) match the GXSXG motif. The Proton donor role is filled by Ser-172. Tyr-186 serves as the catalytic Proton acceptor. NADP(+) contacts are provided by Tyr-186 and Lys-190. Lys-190 acts as the Lowers pKa of active site Tyr in catalysis. The helical transmembrane segment at 271 to 291 (GYMLSSLTCGMAPVTSITEGL) threads the bilayer. Residues 292–293 (QQ) are Lumenal-facing. Residues 294–314 (VVTMGLFRTIALFYLGSFDNI) traverse the membrane as a helical segment. Residues 315 to 332 (VRRCMVQKAKPEVVDKTA) are Cytoplasmic-facing.

Belongs to the short-chain dehydrogenases/reductases (SDR) family.

It is found in the endoplasmic reticulum membrane. It carries out the reaction sphinganine + NADP(+) = 3-oxosphinganine + NADPH + H(+). It functions in the pathway lipid metabolism; sphingolipid metabolism. Catalyzes the reduction of 3'-oxosphinganine (3-ketodihydrosphingosine/KDS) to sphinganine (dihydrosphingosine/DHS), the second step of de novo sphingolipid biosynthesis. This is 3-ketodihydrosphingosine reductase (Kdsr) from Mus musculus (Mouse).